The sequence spans 194 residues: Histone H1.0 (194 aa).

Met-1 carries the post-translational modification N-acetylmethionine. Over residues 1-11 (MTENSTSAPAA) the composition is skewed to low complexity. The segment at 1-29 (MTENSTSAPAAKPKRAKASKKSTDHPKYS) is disordered. An N-acetylthreonine; partial; in Histone H1.0, N-terminally processed modification is found at Thr-2. Asn-4 carries the deamidated asparagine; partial modification. One can recognise an H15 domain in the interval 24-97 (DHPKYSDMIV…GASGSFRLAK (74 aa)). Arg-42 carries the post-translational modification Citrulline. Residues 84-194 (TKGVGASGSF…SSAKRAGKKK (111 aa)) are disordered. An ADP-ribosylserine modification is found at Ser-104. Positions 105–194 (VAFKKTKKEI…SSAKRAGKKK (90 aa)) are enriched in basic residues.

It belongs to the histone H1/H5 family. Post-translationally, phosphorylated on Ser-17 in RNA edited version. In terms of processing, ADP-ribosylated on Ser-104 in response to DNA damage.

The protein localises to the nucleus. The protein resides in the chromosome. Histones H1 are necessary for the condensation of nucleosome chains into higher-order structures. The histones H1.0 are found in cells that are in terminal stages of differentiation or that have low rates of cell division. The protein is Histone H1.0 of Homo sapiens (Human).